We begin with the raw amino-acid sequence, 158 residues long: Endoribonuclease YbeY (158 aa).

Zn(2+) is bound by residues H119, H123, and D129.

Belongs to the endoribonuclease YbeY family. Zn(2+) is required as a cofactor.

Its subcellular location is the cytoplasm. In terms of biological role, single strand-specific metallo-endoribonuclease involved in late-stage 70S ribosome quality control and in maturation of the 3' terminus of the 16S rRNA. The chain is Endoribonuclease YbeY from Chlamydia felis (strain Fe/C-56) (Chlamydophila felis).